The chain runs to 252 residues: 3-dehydroquinate dehydratase (252 aa).

3-dehydroquinate contacts are provided by residues S21, 46 to 48 (EWR), and R82. Residue H143 is the Proton donor/acceptor of the active site. The active-site Schiff-base intermediate with substrate is K170. 3-dehydroquinate-binding residues include R213, S232, and Q236.

This sequence belongs to the type-I 3-dehydroquinase family. As to quaternary structure, homodimer.

It carries out the reaction 3-dehydroquinate = 3-dehydroshikimate + H2O. The protein operates within metabolic intermediate biosynthesis; chorismate biosynthesis; chorismate from D-erythrose 4-phosphate and phosphoenolpyruvate: step 3/7. Its function is as follows. Involved in the third step of the chorismate pathway, which leads to the biosynthesis of aromatic amino acids. Catalyzes the cis-dehydration of 3-dehydroquinate (DHQ) and introduces the first double bond of the aromatic ring to yield 3-dehydroshikimate. The sequence is that of 3-dehydroquinate dehydratase from Escherichia coli O6:K15:H31 (strain 536 / UPEC).